Reading from the N-terminus, the 159-residue chain is Cyclic pyranopterin monophosphate synthase (159 aa).

Substrate contacts are provided by residues 76 to 78 (MCH) and 114 to 115 (ME). The active site involves D129.

The protein belongs to the MoaC family. In terms of assembly, homohexamer; trimer of dimers.

It catalyses the reaction (8S)-3',8-cyclo-7,8-dihydroguanosine 5'-triphosphate = cyclic pyranopterin phosphate + diphosphate. The protein operates within cofactor biosynthesis; molybdopterin biosynthesis. Its function is as follows. Catalyzes the conversion of (8S)-3',8-cyclo-7,8-dihydroguanosine 5'-triphosphate to cyclic pyranopterin monophosphate (cPMP). This Natranaerobius thermophilus (strain ATCC BAA-1301 / DSM 18059 / JW/NM-WN-LF) protein is Cyclic pyranopterin monophosphate synthase.